Consider the following 257-residue polypeptide: Auxin-responsive protein IAA17 (257 aa).

Disordered stretches follow at residues 1 to 51 and 85 to 119; these read MSPP…PAAT and GKKAAAGEEDEDAEEEDKKVAAAPQAPAAKAQVVG. The EAR-like (transcriptional repression) signature appears at 33–37; it reads LRLGL. Residues 105–118 are compositionally biased toward low complexity; the sequence is AAAPQAPAAKAQVV. The 89-residue stretch at 151–239 folds into the PB1 domain; it reads FLYVKVSMDG…SCRRLRIMKG (89 aa).

This sequence belongs to the Aux/IAA family. Homodimers and heterodimers. Highly expressed in etiolated seedlings and flowers. Expressed in roots and green seedlings.

The protein resides in the nucleus. Aux/IAA proteins are short-lived transcriptional factors that function as repressors of early auxin response genes at low auxin concentrations. The chain is Auxin-responsive protein IAA17 (IAA17) from Oryza sativa subsp. japonica (Rice).